The following is a 255-amino-acid chain: MKAYAKANIFLKLTGFDSRKYHLLESRFILLKDVFDELELVDKESDSKKEFEIISNFKCENNIIQKAYLLLSRRYNNELKELFSKKSLKLTKNIPVCAGLGGGSSDCASFLLLMNETLNLKLNLQELINLSIQLGSDIAFFLSGFNSANVSGCGEIIEEFEDDIPTLKWTFPQISCQTKAVYDEFDREIFDFQKNNNQAQIYKKLSTKELLQNFKNKELNDLFTPCATLYPKMKSYLQEDFFLSGSGSSVFKVDR.

Residue Lys-6 is part of the active site. Residue 95 to 105 coordinates ATP; that stretch reads PVCAGLGGGSS. The active site involves Asp-137.

This sequence belongs to the GHMP kinase family. IspE subfamily.

It carries out the reaction 4-CDP-2-C-methyl-D-erythritol + ATP = 4-CDP-2-C-methyl-D-erythritol 2-phosphate + ADP + H(+). It participates in isoprenoid biosynthesis; isopentenyl diphosphate biosynthesis via DXP pathway; isopentenyl diphosphate from 1-deoxy-D-xylulose 5-phosphate: step 3/6. In terms of biological role, catalyzes the phosphorylation of the position 2 hydroxy group of 4-diphosphocytidyl-2C-methyl-D-erythritol. The protein is 4-diphosphocytidyl-2-C-methyl-D-erythritol kinase of Campylobacter jejuni subsp. doylei (strain ATCC BAA-1458 / RM4099 / 269.97).